A 202-amino-acid polypeptide reads, in one-letter code: Small ribosomal subunit protein uS4 (202 aa).

The S4 RNA-binding domain maps to 91 to 168 (SRLSSILYNS…HKVPDYLEVD (78 aa)).

This sequence belongs to the universal ribosomal protein uS4 family. In terms of assembly, part of the 30S ribosomal subunit. Contacts protein S5. The interaction surface between S4 and S5 is involved in control of translational fidelity.

Functionally, one of the primary rRNA binding proteins, it binds directly to 16S rRNA where it nucleates assembly of the body of the 30S subunit. In terms of biological role, with S5 and S12 plays an important role in translational accuracy. This is Small ribosomal subunit protein uS4 from Ehrlichia canis (strain Jake).